The following is a 692-amino-acid chain: A-kinase anchor protein 8 (692 aa).

The interval Met1 to Phe195 is interaction with MCM2. The interval Met1–Phe210 is interaction with DPY30. An Asymmetric dimethylarginine; alternate modification is found at Arg109. Residue Arg109 is modified to Omega-N-methylarginine; alternate. Residues Arg109–Pro201 are interaction with DDX5. Position 112 is a phosphoserine (Ser112). Disordered stretches follow at residues Gly168–Thr203, Gly231–Pro254, and Ser269–Asp382. Residues Glu172–Ser182 are compositionally biased toward basic and acidic residues. The residue at position 199 (Ser199) is a Phosphoserine. 2 positions are modified to omega-N-methylarginine: Arg233 and Arg277. 2 stretches are compositionally biased toward basic and acidic residues: residues Arg281 to Gly297 and Pro314 to Ser323. The short motif at Lys289 to Lys306 is the Bipartite nuclear localization signal element. A Glycyl lysine isopeptide (Lys-Gly) (interchain with G-Cter in SUMO2) cross-link involves residue Lys317. Ser323, Ser328, and Ser339 each carry phosphoserine. The segment covering Glu324–Ala334 has biased composition (acidic residues). Positions Arg387–Glu450 are involved in chromatin-binding. 2 C2H2 AKAP95-type zinc fingers span residues Cys392–His414 and Cys481–His504. The tract at residues Ser525–Thr569 is involved in condensin complex recruitment. Positions Pro545 to Glu571 are disordered. Acidic residues predominate over residues Val551–Gly562. Lys567 participates in a covalent cross-link: Glycyl lysine isopeptide (Lys-Gly) (interchain with G-Cter in SUMO2). Residues Glu572 to Val589 are RII-binding. A required for interaction with MYCBP region spans residues Asp576–Gly593. Residues Glu592–Glu692 form a disordered region. Positions Ala634–Ala646 are enriched in basic and acidic residues. Position 662 is a phosphoserine (Ser662). The span at Ala663–Asp675 shows a compositional bias: low complexity. Residues Ala683–Glu692 show a composition bias toward basic and acidic residues. Ser685 carries the post-translational modification Phosphoserine.

The protein belongs to the AKAP95 family. As to quaternary structure, binds to the PKA RII-alpha regulatory subunit PRKAR2A (phosphorylated at 'Thr-54') during mitosis. Interacts (via C-terminus) with FIGN. Interacts with NCAPD2, CCND1, MCM2, RPS6KA1, PDE4A. Interacts with CCND3, CCNE1, DDX5, CASP3. Interacts with NFKB1; detetcted in the cytoplasm. Interacts with MYCBP; MYCBP is translocated to the nucleus and the interaction prevents the association of the PKA catalytic subunit leading to suppression of PKA activity. Interacts with DPY30; mediating AKAP8 association with at least the MLL4/WBP7 HMT complex. Interacts with HDAC3; increased during mitosis. Interacts with GJA1; in the nucleus and in the nuclear membrane; the nuclear association increases with progress of cell cycle G1, S and G2 phase and decreases in M phase. Post-translationally, phosphorylated on tyrosine residues probably by SRC subfamily protein kinases; multiple phosphorylation is leading to dissociation from nuclear structures implicated in chromatin structural changes. Highly expressed in heart, liver, skeletal muscle, kidney and pancreas. Expressed in mature dendritic cells.

The protein resides in the nucleus. Its subcellular location is the nucleus matrix. It is found in the nucleolus. It localises to the cytoplasm. Anchoring protein that mediates the subcellular compartmentation of cAMP-dependent protein kinase (PKA type II). Acts as an anchor for a PKA-signaling complex onto mitotic chromosomes, which is required for maintenance of chromosomes in a condensed form throughout mitosis. Recruits condensin complex subunit NCAPD2 to chromosomes required for chromatin condensation; the function appears to be independent from PKA-anchoring. May help to deliver cyclin D/E to CDK4 to facilitate cell cycle progression. Required for cell cycle G2/M transition and histone deacetylation during mitosis. In mitotic cells recruits HDAC3 to the vicinity of chromatin leading to deacetylation and subsequent phosphorylation at 'Ser-10' of histone H3; in this function may act redundantly with AKAP8L. Involved in nuclear retention of RPS6KA1 upon ERK activation thus inducing cell proliferation. May be involved in regulation of DNA replication by acting as scaffold for MCM2. Enhances HMT activity of the KMT2 family MLL4/WBP7 complex and is involved in transcriptional regulation. In a teratocarcinoma cell line is involved in retinoic acid-mediated induction of developmental genes implicating H3 'Lys-4' methylation. May be involved in recruitment of active CASP3 to the nucleus in apoptotic cells. May act as a carrier protein of GJA1 for its transport to the nucleus. May play a repressive role in the regulation of rDNA transcription. Preferentially binds GC-rich DNA in vitro. In cells, associates with ribosomal RNA (rRNA) chromatin, preferentially with rRNA promoter and transcribed regions. Involved in modulation of Toll-like receptor signaling. Required for the cAMP-dependent suppression of TNF-alpha in early stages of LPS-induced macrophage activation; the function probably implicates targeting of PKA to NFKB1. This Homo sapiens (Human) protein is A-kinase anchor protein 8 (AKAP8).